We begin with the raw amino-acid sequence, 443 residues long: Putative phosphoribosyl transferase MT0597 (443 aa).

It in the N-terminal section; belongs to the purine/pyrimidine phosphoribosyltransferase family. The protein in the C-terminal section; belongs to the dienelactone hydrolase family.

This Mycobacterium tuberculosis (strain CDC 1551 / Oshkosh) protein is Putative phosphoribosyl transferase MT0597.